Reading from the N-terminus, the 428-residue chain is Sporulation kinase C (428 aa).

The next 2 helical transmembrane spans lie at 8-28 (IISIILAMIFIMFWDYLFYFI) and 36-56 (PVDIVYTAVTLVSVWMLAYYI). A PAS domain is found at 76 to 147 (LSEEKNRIMD…NTQIQNKASS (72 aa)). Positions 148–200 (GMFTAKYVTKNGTIFWGEVHYKLYYDRDDQFTGSLGTMSDITERKEAEDELIE) constitute a PAC domain. The region spanning 221–426 (GIAHEVRNPL…VFQVVLPLKS (206 aa)) is the Histidine kinase domain. The residue at position 224 (H224) is a Phosphohistidine; by autocatalysis.

As to quaternary structure, oligomerizes, probably forms homodimers; oligomerization is assisted by FloT. Interacts with FloT. Another study shows only rare colocalization with FloT or FloA membrane assemblies. KinC membrane assemblies are more mobile than FloT membrane assemblies.

The protein resides in the cell membrane. It localises to the membrane raft. It carries out the reaction ATP + protein L-histidine = ADP + protein N-phospho-L-histidine.. In terms of biological role, phosphorylates the sporulation-regulatory protein Spo0A a transcription factor that also controls biofilm formation. Requires FloT and FloA for localization to DRMs and for activity. The polypeptide is Sporulation kinase C (Bacillus subtilis (strain 168)).